The sequence spans 283 residues: Pantothenate synthetase (283 aa).

Residue 30–37 (MGYLHEGH) coordinates ATP. The Proton donor role is filled by His-37. Gln-61 contacts (R)-pantoate. A beta-alanine-binding site is contributed by Gln-61. 147 to 150 (GRKD) provides a ligand contact to ATP. Position 153 (Gln-153) interacts with (R)-pantoate. Residues Val-176 and 184 to 187 (MSSR) contribute to the ATP site.

This sequence belongs to the pantothenate synthetase family. As to quaternary structure, homodimer.

Its subcellular location is the cytoplasm. It catalyses the reaction (R)-pantoate + beta-alanine + ATP = (R)-pantothenate + AMP + diphosphate + H(+). Its pathway is cofactor biosynthesis; (R)-pantothenate biosynthesis; (R)-pantothenate from (R)-pantoate and beta-alanine: step 1/1. In terms of biological role, catalyzes the condensation of pantoate with beta-alanine in an ATP-dependent reaction via a pantoyl-adenylate intermediate. The sequence is that of Pantothenate synthetase from Syntrophotalea carbinolica (strain DSM 2380 / NBRC 103641 / GraBd1) (Pelobacter carbinolicus).